We begin with the raw amino-acid sequence, 826 residues long: Capsid-associated protein Vp91 (826 aa).

A signal peptide spans 1–18 (MSDVVLLVLAIIFIIIFV). The C2HC BV-type zinc-finger motif lies at 147 to 196 (CVPINPCDTRAPGLYAMDEHLLDALVHSQHLDKDYTINAHLQHPTLYLRC). 2 disulfides stabilise this stretch: C207/C220 and C260/C273. N-linked (GlcNAc...) asparagine; by host glycosylation is present at N210. The Chitin-binding type-2 domain maps to 223–281 (NELCQGRPDGYVLDYFPETLLVNEFVECYESKHVVKQCPEQHVFDRQLMTCVQAHPCAF). 6 N-linked (GlcNAc...) asparagine; by host glycosylation sites follow: N333, N371, N413, N510, N520, and N609. The tract at residues 651-679 (GDGDHWGPDLPPPVQPDSEPDESEPEPEV) is disordered. The span at 668–677 (SEPDESEPEP) shows a compositional bias: acidic residues. N722 carries an N-linked (GlcNAc...) asparagine; by host glycan.

The protein resides in the virion. Its function is as follows. Probable capsid-associated protein. The sequence is that of Capsid-associated protein Vp91 from Epiphyas postvittana nucleopolyhedrovirus (EppoMNPV).